Consider the following 427-residue polypeptide: Gamma-glutamyl phosphate reductase (427 aa).

The protein belongs to the gamma-glutamyl phosphate reductase family.

The protein localises to the cytoplasm. It carries out the reaction L-glutamate 5-semialdehyde + phosphate + NADP(+) = L-glutamyl 5-phosphate + NADPH + H(+). It functions in the pathway amino-acid biosynthesis; L-proline biosynthesis; L-glutamate 5-semialdehyde from L-glutamate: step 2/2. Functionally, catalyzes the NADPH-dependent reduction of L-glutamate 5-phosphate into L-glutamate 5-semialdehyde and phosphate. The product spontaneously undergoes cyclization to form 1-pyrroline-5-carboxylate. This Streptomyces griseus subsp. griseus (strain JCM 4626 / CBS 651.72 / NBRC 13350 / KCC S-0626 / ISP 5235) protein is Gamma-glutamyl phosphate reductase.